The following is a 175-amino-acid chain: Protein OPG036 (175 aa).

Belongs to the poxviridae OPG036 family.

It localises to the host nucleus. In terms of biological role, plays a role in the inhibition of host innate immune response. Within the host nucleus, inhibits activation of interferon-beta promoter by inhibiting IRF3 activation. The chain is Protein OPG036 (OPG036) from Bos taurus (Bovine).